Consider the following 295-residue polypeptide: Tissue factor (295 aa).

Positions 1-32 (METPAWPRVPRPETAVARTLLLGWVFAQVAGA) are cleaved as a signal peptide. The Extracellular segment spans residues 33 to 251 (SGTTNTVAAY…MGQEKGEFRE (219 aa)). Short sequence motifs (WKS motif) lie at residues 46 to 48 (WKS) and 77 to 79 (WKS). Cys81 and Cys89 form a disulfide bridge. N-linked (GlcNAc...) asparagine glycans are attached at residues Asn156 and Asn169. Positions 190 to 192 (WKS) match the WKS motif motif. A disulfide bridge connects residues Cys218 and Cys241. Residues 252–274 (IFYIIGAVVFVVIILVIILAISL) form a helical membrane-spanning segment. The Cytoplasmic portion of the chain corresponds to 275–295 (HKCRKAGVGQSWKENSPLNVS). Cys277 is lipidated: S-palmitoyl cysteine.

Belongs to the tissue factor family. As to quaternary structure, interacts with HSPE; the interaction, inhibited by heparin, promotes the generation of activated factor X and activates coagulation in the presence of activated factor VII. As to expression, lung, placenta and pancreas.

The protein localises to the membrane. It is found in the secreted. In terms of biological role, initiates blood coagulation by forming a complex with circulating factor VII or VIIa. The [TF:VIIa] complex activates factors IX or X by specific limited proteolysis. TF plays a role in normal hemostasis by initiating the cell-surface assembly and propagation of the coagulation protease cascade. In Homo sapiens (Human), this protein is Tissue factor (F3).